A 421-amino-acid chain; its full sequence is tRNA (guanine(37)-N(1))-methyltransferase (421 aa).

S-adenosyl-L-methionine contacts are provided by residues Arg-198, 242–243 (DL), 270–271 (DA), and Asn-293.

It belongs to the class I-like SAM-binding methyltransferase superfamily. TRM5/TYW2 family. In terms of assembly, monomer.

The protein localises to the mitochondrion matrix. Its subcellular location is the nucleus. It is found in the cytoplasm. The catalysed reaction is guanosine(37) in tRNA + S-adenosyl-L-methionine = N(1)-methylguanosine(37) in tRNA + S-adenosyl-L-homocysteine + H(+). Functionally, specifically methylates the N1 position of guanosine-37 in various cytoplasmic and mitochondrial tRNAs. Methylation is not dependent on the nature of the nucleoside 5' of the target nucleoside. This is the first step in the biosynthesis of wybutosine (yW), a modified base adjacent to the anticodon of tRNAs and required for accurate decoding. The chain is tRNA (guanine(37)-N(1))-methyltransferase from Paramecium tetraurelia.